The following is a 129-amino-acid chain: Small ribosomal subunit protein uS8my (129 aa).

The protein belongs to the universal ribosomal protein uS8 family. In terms of assembly, component of the mitochondrial ribosome small subunit.

It is found in the mitochondrion. This chain is Small ribosomal subunit protein uS8my (RPS15AE), found in Arabidopsis thaliana (Mouse-ear cress).